Reading from the N-terminus, the 680-residue chain is tRNA 5-methylaminomethyl-2-thiouridine biosynthesis bifunctional protein MnmC (680 aa).

Residues 1–267 are tRNA (mnm(5)s(2)U34)-methyltransferase; it reads MTAEPNKPCQ…MAAILSSDAP (267 aa). The interval 273–680 is FAD-dependent cmnm(5)s(2)U34 oxidoreductase; it reads IGGGLASAHL…LRKLLKGKAL (408 aa).

In the N-terminal section; belongs to the methyltransferase superfamily. tRNA (mnm(5)s(2)U34)-methyltransferase family. This sequence in the C-terminal section; belongs to the DAO family. FAD serves as cofactor.

The protein resides in the cytoplasm. The enzyme catalyses 5-aminomethyl-2-thiouridine(34) in tRNA + S-adenosyl-L-methionine = 5-methylaminomethyl-2-thiouridine(34) in tRNA + S-adenosyl-L-homocysteine + H(+). Catalyzes the last two steps in the biosynthesis of 5-methylaminomethyl-2-thiouridine (mnm(5)s(2)U) at the wobble position (U34) in tRNA. Catalyzes the FAD-dependent demodification of cmnm(5)s(2)U34 to nm(5)s(2)U34, followed by the transfer of a methyl group from S-adenosyl-L-methionine to nm(5)s(2)U34, to form mnm(5)s(2)U34. This is tRNA 5-methylaminomethyl-2-thiouridine biosynthesis bifunctional protein MnmC from Shewanella putrefaciens (strain CN-32 / ATCC BAA-453).